Consider the following 245-residue polypeptide: 1-(5-phosphoribosyl)-5-[(5-phosphoribosylamino)methylideneamino] imidazole-4-carboxamide isomerase (245 aa).

D7 functions as the Proton acceptor in the catalytic mechanism. D129 serves as the catalytic Proton donor.

This sequence belongs to the HisA/HisF family.

It is found in the cytoplasm. It catalyses the reaction 1-(5-phospho-beta-D-ribosyl)-5-[(5-phospho-beta-D-ribosylamino)methylideneamino]imidazole-4-carboxamide = 5-[(5-phospho-1-deoxy-D-ribulos-1-ylimino)methylamino]-1-(5-phospho-beta-D-ribosyl)imidazole-4-carboxamide. The protein operates within amino-acid biosynthesis; L-histidine biosynthesis; L-histidine from 5-phospho-alpha-D-ribose 1-diphosphate: step 4/9. The sequence is that of 1-(5-phosphoribosyl)-5-[(5-phosphoribosylamino)methylideneamino] imidazole-4-carboxamide isomerase from Pectobacterium atrosepticum (strain SCRI 1043 / ATCC BAA-672) (Erwinia carotovora subsp. atroseptica).